The chain runs to 124 residues: Heat-labile enterotoxin B chain (124 aa).

The N-terminal stretch at 1–21 is a signal peptide; it reads MNKVKCYVLFTALLSSLCAYG. A disulfide bridge links cysteine 30 with cysteine 107.

Heterohexamer of one A chain and of five B chains.

In terms of biological role, the biological activity of the toxin is produced by the A chain, which activates intracellular adenyl cyclase. This chain is Heat-labile enterotoxin B chain (eltB), found in Escherichia coli O78:H11 (strain H10407 / ETEC).